The chain runs to 1292 residues: Epidermal growth factor receptor (1292 aa).

The Extracellular segment spans residues 1-641 (MYNNYNLCHI…AGLIENELQP (641 aa)). N-linked (GlcNAc...) asparagine glycosylation is found at asparagine 31, asparagine 224, asparagine 263, asparagine 323, asparagine 342, asparagine 600, and asparagine 605. Residues 642 to 662 (AILAGVAVFALAFLVVAAIIM) traverse the membrane as a helical segment. Over 663–1292 (YFWRVRAKAK…KPLRKNETTV (630 aa)) the chain is Cytoplasmic. Phosphothreonine; by PKC is present on threonine 675. One can recognise a Protein kinase domain in the interval 711–978 (MRKGGILGYG…KMSRDPGRYL (268 aa)). Residues 717 to 725 (LGYGAFGNV) and lysine 744 each bind ATP. Residue aspartate 836 is the Proton acceptor of the active site. Residues 1022 to 1066 (PKSRAPIPPGLSASSTSGSPPNTPVKPCWPNGKPLAADSPTPQNQ) are disordered. At tyrosine 1166 the chain carries Phosphotyrosine; by autocatalysis. Residues 1253-1292 (SQVRQRSSEEESDHEYYNDFDRLERELQPLKPLRKNETTV) form a disordered region. The segment covering 1258–1292 (RSSEEESDHEYYNDFDRLERELQPLKPLRKNETTV) has biased composition (basic and acidic residues).

Belongs to the protein kinase superfamily. Tyr protein kinase family. EGF receptor subfamily.

Its subcellular location is the membrane. It carries out the reaction L-tyrosyl-[protein] + ATP = O-phospho-L-tyrosyl-[protein] + ADP + H(+). With respect to regulation, activated by MRJP1 during queen determination of honeybee larvae. Upon binding to its ligands, transduces the signal through the ras-raf-MAPK pathway and is involved in a myriad of developmental decisions. Involved in the determination of adult size, ovary development, and development timing, especially during queen determination of honeybee larvae. May have an important role in the prolongation of longevity in queens. The polypeptide is Epidermal growth factor receptor (Egfr) (Apis mellifera (Honeybee)).